A 336-amino-acid polypeptide reads, in one-letter code: Large ribosomal subunit protein uL3 (336 aa).

Disordered regions lie at residues 1–43 (MPQP…QGFA), 205–230 (ITKGKGTQGPVKRWGVQKRKGKHARQ), and 311–336 (RPAVRPGDQPRLDPEVRYVSTASNQG). Residues 219-230 (GVQKRKGKHARQ) show a composition bias toward basic residues.

It belongs to the universal ribosomal protein uL3 family. In terms of assembly, part of the 50S ribosomal subunit. Forms a cluster with proteins L14 and L24e.

One of the primary rRNA binding proteins, it binds directly near the 3'-end of the 23S rRNA, where it nucleates assembly of the 50S subunit. The polypeptide is Large ribosomal subunit protein uL3 (Natronomonas pharaonis (strain ATCC 35678 / DSM 2160 / CIP 103997 / JCM 8858 / NBRC 14720 / NCIMB 2260 / Gabara) (Halobacterium pharaonis)).